The primary structure comprises 84 residues: Small ribosomal subunit protein bS18 (84 aa).

The protein belongs to the bacterial ribosomal protein bS18 family. As to quaternary structure, part of the 30S ribosomal subunit. Forms a tight heterodimer with protein bS6.

Functionally, binds as a heterodimer with protein bS6 to the central domain of the 16S rRNA, where it helps stabilize the platform of the 30S subunit. The protein is Small ribosomal subunit protein bS18 of Helicobacter hepaticus (strain ATCC 51449 / 3B1).